A 403-amino-acid chain; its full sequence is Serine/threonine transporter SstT (403 aa).

The next 8 helical transmembrane spans lie at 11 to 31 (GNLVIRIAIGLVLGVLLAFIS), 51 to 71 (AIAPILVFVLVLSAIANKEVG), 81 to 101 (VMYVLGTFLAALTAVVFSFIF), 138 to 158 (ALANANFIGILAWAIGLGIPL), 175 to 195 (AVSYVVKMVISVAPIGVFGLV), 213 to 233 (LLGVLLGAMMTVIFVLDPILV), 285 to 305 (VAIPLGATINMAGAAITVTVL), and 319 to 339 (FMTALLLSIVASICACGASGV).

This sequence belongs to the dicarboxylate/amino acid:cation symporter (DAACS) (TC 2.A.23) family.

It localises to the cell inner membrane. It catalyses the reaction L-serine(in) + Na(+)(in) = L-serine(out) + Na(+)(out). The enzyme catalyses L-threonine(in) + Na(+)(in) = L-threonine(out) + Na(+)(out). Involved in the import of serine and threonine into the cell, with the concomitant import of sodium (symport system). The protein is Serine/threonine transporter SstT of Haemophilus ducreyi (strain 35000HP / ATCC 700724).